Here is a 158-residue protein sequence, read N- to C-terminus: UPF0262 protein Rsph17029_2283 (158 aa).

This sequence belongs to the UPF0262 family.

This is UPF0262 protein Rsph17029_2283 from Cereibacter sphaeroides (strain ATCC 17029 / ATH 2.4.9) (Rhodobacter sphaeroides).